Reading from the N-terminus, the 295-residue chain is MNGYWKPALVVLGLVSLSYAFTTIETEIFQLQNEISTKYGPDMNFYKFLKLPKLQNSSTKEITKNLRKLSKKYHPDKNPKYRKLYERLNLATQILSNSSNRKIYDYYLQNGFPNYDFHKGGFYFSRMKPKTWFLLAFIWIVVNIGQYIISIIQYRSQRSRIENFISQCKQQDDTNGLGVKQLTFKQHEKDEGKSLVVRFSDVYVVEPDGSETLISPDTLDKPSVKNCLFWRIPASVWNMTFGKSVGSAGKEEIITDSKKYDGNQTKKGNKVKKGSAKKGQKKMELPNGKVIYSRK.

The N-terminal stretch at Met1 to Ala20 is a signal peptide. At Phe21–Lys130 the chain is on the lumenal side. The J domain maps to Asp42–Asn110. The chain crosses the membrane as a helical span at residues Thr131 to Ile151. The Cytoplasmic segment spans residues Ile152–Lys295. The segment at Lys259–Asn287 is disordered. Residues Lys267–Gln280 are compositionally biased toward basic residues.

Belongs to the DnaJ family.

The protein localises to the endoplasmic reticulum membrane. Functionally, dnaJ-like chaperone required for the folding capacity of the endoplasmic reticulum. This Saccharomyces cerevisiae (strain ATCC 204508 / S288c) (Baker's yeast) protein is ER-localized J domain-containing protein 5 (ERJ5).